We begin with the raw amino-acid sequence, 165 residues long: uncharacterized protein (165 aa).

Positions 1–38 (MFTVKEKNRQELEEELNDLEFQIYRMQENMKDLSKDAK) form a coiled coil.

This is an uncharacterized protein from Bacillus subtilis (strain 168).